The sequence spans 208 residues: Uracil phosphoribosyltransferase (208 aa).

Residues Arg78, Arg103, and 130–138 (DPMLATGGS) contribute to the 5-phospho-alpha-D-ribose 1-diphosphate site. Residues Ile193 and 198–200 (GDA) each bind uracil. Asp199 contacts 5-phospho-alpha-D-ribose 1-diphosphate.

Belongs to the UPRTase family. Mg(2+) serves as cofactor.

It catalyses the reaction UMP + diphosphate = 5-phospho-alpha-D-ribose 1-diphosphate + uracil. The protein operates within pyrimidine metabolism; UMP biosynthesis via salvage pathway; UMP from uracil: step 1/1. Allosterically activated by GTP. In terms of biological role, catalyzes the conversion of uracil and 5-phospho-alpha-D-ribose 1-diphosphate (PRPP) to UMP and diphosphate. This is Uracil phosphoribosyltransferase from Aliivibrio salmonicida (strain LFI1238) (Vibrio salmonicida (strain LFI1238)).